We begin with the raw amino-acid sequence, 685 residues long: Sulfate transporter 4.1, chloroplastic (685 aa).

A chloroplast-targeting transit peptide spans 1–23; sequence MSYASLSVKDLTSLVSRSGTGSS. A compositionally biased stretch (low complexity) spans 15 to 26; the sequence is VSRSGTGSSSSL. The disordered stretch occupies residues 15–53; sequence VSRSGTGSSSSLKPPGQTRPVKVIPLQHPDTSNEARPPS. 12 helical membrane passes run 97–117, 122–142, 147–167, 175–195, 203–223, 255–275, 283–303, 332–352, 369–389, 406–426, 434–454, and 473–493; these read LDLM…MSYA, LPPI…AIFG, LAIG…GGIA, IELA…MGLL, FISH…IGLS, WPPF…KHVG, FLRA…AKVF, TLLP…VGIA, LFGL…PATG, LSGL…TPMF, LAAI…AIFL, and LFFG…AFVI. One can recognise an STAS domain in the interval 518 to 642; the sequence is QYPEAYTYNG…VRVHDAVQVC (125 aa).

Belongs to the SLC26A/SulP transporter (TC 2.A.53) family. As to expression, expressed both in roots and leaves.

It is found in the plastid. The protein localises to the chloroplast membrane. H(+)/sulfate cotransporter that may play a role in the regulation of sulfate assimilation. The chain is Sulfate transporter 4.1, chloroplastic (SULTR4;1) from Arabidopsis thaliana (Mouse-ear cress).